Consider the following 205-residue polypeptide: Probable ADP-ribosylation factor At2g15310 (205 aa).

A lipid anchor (N-myristoyl glycine) is attached at Gly2. Residues 24-31 (GLDGSGKT), 67-71 (DIGGQ), and 126-129 (NKQD) contribute to the GTP site.

Belongs to the small GTPase superfamily. Arf family.

It localises to the golgi apparatus. GTP-binding protein involved in protein trafficking; may modulate vesicle budding and uncoating within the Golgi apparatus. The chain is Probable ADP-ribosylation factor At2g15310 from Arabidopsis thaliana (Mouse-ear cress).